Consider the following 243-residue polypeptide: Type III pantothenate kinase (243 aa).

Residue 7 to 14 participates in ATP binding; that stretch reads DIGNTRLK. Residues tyrosine 95 and 102–105 contribute to the substrate site; that span reads GIDR. The Proton acceptor role is filled by aspartate 104. Position 126 (threonine 126) interacts with ATP. A substrate-binding site is contributed by threonine 177.

Belongs to the type III pantothenate kinase family. Homodimer. NH4(+) serves as cofactor. Requires K(+) as cofactor.

It is found in the cytoplasm. The catalysed reaction is (R)-pantothenate + ATP = (R)-4'-phosphopantothenate + ADP + H(+). It participates in cofactor biosynthesis; coenzyme A biosynthesis; CoA from (R)-pantothenate: step 1/5. Its function is as follows. Catalyzes the phosphorylation of pantothenate (Pan), the first step in CoA biosynthesis. This chain is Type III pantothenate kinase, found in Acinetobacter baylyi (strain ATCC 33305 / BD413 / ADP1).